A 294-amino-acid polypeptide reads, in one-letter code: 4-hydroxy-tetrahydrodipicolinate synthase (294 aa).

Threonine 44 is a pyruvate binding site. The active-site Proton donor/acceptor is the tyrosine 132. Lysine 161 functions as the Schiff-base intermediate with substrate in the catalytic mechanism. Isoleucine 206 lines the pyruvate pocket.

Belongs to the DapA family. As to quaternary structure, homotetramer; dimer of dimers.

It is found in the cytoplasm. The catalysed reaction is L-aspartate 4-semialdehyde + pyruvate = (2S,4S)-4-hydroxy-2,3,4,5-tetrahydrodipicolinate + H2O + H(+). It participates in amino-acid biosynthesis; L-lysine biosynthesis via DAP pathway; (S)-tetrahydrodipicolinate from L-aspartate: step 3/4. In terms of biological role, catalyzes the condensation of (S)-aspartate-beta-semialdehyde [(S)-ASA] and pyruvate to 4-hydroxy-tetrahydrodipicolinate (HTPA). The sequence is that of 4-hydroxy-tetrahydrodipicolinate synthase from Thermotoga sp. (strain RQ2).